The following is a 255-amino-acid chain: Ribonuclease HII (255 aa).

The region spanning 73 to 255 is the RNase H type-2 domain; sequence LYIGGIDEAG…HRKSFLKNIL (183 aa). A divalent metal cation is bound by residues Asp79, Glu80, and Asp171.

Belongs to the RNase HII family. Mn(2+) serves as cofactor. Mg(2+) is required as a cofactor.

It is found in the cytoplasm. The enzyme catalyses Endonucleolytic cleavage to 5'-phosphomonoester.. Functionally, endonuclease that specifically degrades the RNA of RNA-DNA hybrids. The protein is Ribonuclease HII of Clostridioides difficile (strain 630) (Peptoclostridium difficile).